A 1145-amino-acid polypeptide reads, in one-letter code: Pol polyprotein (1145 aa).

Residues 13 to 77 (SKKREARGSR…GSSRGSQPGQ (65 aa)) form a disordered region. Residues 29–41 (FPDTTEESAQQIC) show a composition bias toward polar residues. Residues 45 to 59 (DSSDSKSVPRSERNK) show a composition bias toward basic and acidic residues. The span at 66–76 (GEGSSRGSQPG) shows a compositional bias: polar residues. Positions 100-174 (LNVLLDTGAD…IPVTILGRDI (75 aa)) constitute a Peptidase A2 domain. The active site involves Asp105. The Reverse transcriptase domain occupies 230 to 418 (EGKISEASDN…PPYSWLGYQL (189 aa)). The region spanning 616-739 (PTSGITIYTD…ADEAAKIKEE (124 aa)) is the RNase H type-1 domain. The Integrase-type zinc-finger motif lies at 877–918 (ENIQEAQDEHENWHTSPKILARNYKIPLTVAKQITQECPHCT). The Zn(2+) site is built by His886, His890, Cys914, and Cys917. One can recognise an Integrase catalytic domain in the interval 920–1077 (QGSGPAGCVM…TPWEVFITNQ (158 aa)). Positions 1095–1143 (KFCFYKIPGEHDWKGPTRVLWKGDGAVVVNDEGKGIIAVPLTRTKLLIK) form a DNA-binding region, integrase-type.

Belongs to the retroviral Pol polyprotein family. Specific enzymatic cleavages in vivo yield mature proteins.

It carries out the reaction Endohydrolysis of RNA in RNA/DNA hybrids. Three different cleavage modes: 1. sequence-specific internal cleavage of RNA. Human immunodeficiency virus type 1 and Moloney murine leukemia virus enzymes prefer to cleave the RNA strand one nucleotide away from the RNA-DNA junction. 2. RNA 5'-end directed cleavage 13-19 nucleotides from the RNA end. 3. DNA 3'-end directed cleavage 15-20 nucleotides away from the primer terminus.. It catalyses the reaction 3'-end directed exonucleolytic cleavage of viral RNA-DNA hybrid.. The catalysed reaction is DNA(n) + a 2'-deoxyribonucleoside 5'-triphosphate = DNA(n+1) + diphosphate. Its function is as follows. During replicative cycle of retroviruses, the reverse-transcribed viral DNA is integrated into the host chromosome by the viral integrase enzyme. RNase H activity is associated with the reverse transcriptase. This is Pol polyprotein (pol) from Equus asinus (Donkey).